The following is a 554-amino-acid chain: MAELTISADDIQSAIEEYVGSFTSDTSREEVGTVVDAGDGIAHVEGLPSVMTQELLEFPGGVLGVALNLDEHSVGAVILGDFEKIEEGQQVKRTGEVLSVPVGDAFLGRVVNPLGQPIDGQGDIETDIRRALEIQAPSVVQRQSVKEPLQTGIKAIDAMTPIGRGQRQLIIGDRKTGKTAVCVDTILNQRQNWESGDEKKQVRCVYVAIGQKGTTIASVRRALEEGGAMDYTTIVAAPASDSAGFKWLAPYTGSAIAQHWMYDGKHVLIVFDDLSKQAEAYRAISLLLRRPPGREAYPGDVFYLHSRLLERCAKLSDELGGGSMTGLPIIETKANDISAYIPTNVISITDGQCFLESDLFNQGVRPAINVGVSVSRVGGAAQIKAMKEVAGSLRLDLSQFRELEAFAAFASDLDATSKAQLDRGARLVELLKQPQYQPMPVEEQVVSIFLGTGGHLDSVPVEDVRRFETELLDHMRASEDKILAGIRDTQKLSDEAAEELEKVINNFKKGFAATGGASVVPDEHVEALDEEELEKESVKVKKPAPEKKAKKEQK.

Residue 172 to 179 coordinates ATP; it reads GDRKTGKT. Residues 528–554 form a disordered region; sequence LDEEELEKESVKVKKPAPEKKAKKEQK. Basic and acidic residues predominate over residues 535–554; sequence KESVKVKKPAPEKKAKKEQK.

This sequence belongs to the ATPase alpha/beta chains family. In terms of assembly, F-type ATPases have 2 components, CF(1) - the catalytic core - and CF(0) - the membrane proton channel. CF(1) has five subunits: alpha(3), beta(3), gamma(1), delta(1), epsilon(1). CF(0) has three main subunits: a(1), b(2) and c(9-12). The alpha and beta chains form an alternating ring which encloses part of the gamma chain. CF(1) is attached to CF(0) by a central stalk formed by the gamma and epsilon chains, while a peripheral stalk is formed by the delta and b chains.

The protein localises to the cell membrane. It carries out the reaction ATP + H2O + 4 H(+)(in) = ADP + phosphate + 5 H(+)(out). In terms of biological role, produces ATP from ADP in the presence of a proton gradient across the membrane. The alpha chain is a regulatory subunit. This Mycolicibacterium paratuberculosis (strain ATCC BAA-968 / K-10) (Mycobacterium paratuberculosis) protein is ATP synthase subunit alpha.